Reading from the N-terminus, the 311-residue chain is MHPTRSFQGLILTLHNYWAEHGCAILQPYDMEVGAGTFHPATTLRSLGPKPWKAAYVQPSRRPKDGRYGENPNRLQHYYQYQVIIKPSPPNLQDLYLGSLRAIGLDPTLHDVRFVEDDWESPTLGAWGLGWECWCDGMEVSQFTYFQQVCGIECSPVSGELTYGLERLAMYVQGVDNVYDLNFNGLEGDEKVTYGEVFLQAEQEYSRYNFEMANTEALRQHFIDAERECEAILKAGAPGPNANHQMHKSVFPAYDQCIKASHVFNLMDARGVISVTERQSYILRVRNLARQCGEAFLLTDAGGFNFKREGE.

This sequence belongs to the class-II aminoacyl-tRNA synthetase family. As to quaternary structure, tetramer of two alpha and two beta subunits.

It localises to the cytoplasm. It catalyses the reaction tRNA(Gly) + glycine + ATP = glycyl-tRNA(Gly) + AMP + diphosphate. This is Glycine--tRNA ligase alpha subunit from Brucella anthropi (strain ATCC 49188 / DSM 6882 / CCUG 24695 / JCM 21032 / LMG 3331 / NBRC 15819 / NCTC 12168 / Alc 37) (Ochrobactrum anthropi).